The chain runs to 99 residues: NADH-quinone oxidoreductase subunit K (99 aa).

3 consecutive transmembrane segments (helical) span residues 3–23, 28–48, and 59–79; these read VTAYVVLSGILFTIGCVGVLI, IVVFMCVELMLNASNLALVAF, and IAAFFVMVVAAAEVVVGLAII.

This sequence belongs to the complex I subunit 4L family. In terms of assembly, NDH-1 is composed of 14 different subunits. Subunits NuoA, H, J, K, L, M, N constitute the membrane sector of the complex.

The protein resides in the cell membrane. It carries out the reaction a quinone + NADH + 5 H(+)(in) = a quinol + NAD(+) + 4 H(+)(out). Functionally, NDH-1 shuttles electrons from NADH, via FMN and iron-sulfur (Fe-S) centers, to quinones in the respiratory chain. The immediate electron acceptor for the enzyme in this species is believed to be a menaquinone. Couples the redox reaction to proton translocation (for every two electrons transferred, four hydrogen ions are translocated across the cytoplasmic membrane), and thus conserves the redox energy in a proton gradient. This is NADH-quinone oxidoreductase subunit K from Nocardioides sp. (strain ATCC BAA-499 / JS614).